A 404-amino-acid polypeptide reads, in one-letter code: Argininosuccinate synthase (404 aa).

Position 9 to 17 (Ala9 to Ser17) interacts with ATP. L-citrulline is bound at residue Tyr86. Position 116 (Gly116) interacts with ATP. L-aspartate-binding residues include Thr118, Asn122, and Asp123. Asn122 provides a ligand contact to L-citrulline. Residues Arg126, Ser174, Ser183, Glu259, and Tyr271 each contribute to the L-citrulline site.

The protein belongs to the argininosuccinate synthase family. Type 1 subfamily. In terms of assembly, homotetramer.

It is found in the cytoplasm. It catalyses the reaction L-citrulline + L-aspartate + ATP = 2-(N(omega)-L-arginino)succinate + AMP + diphosphate + H(+). Its pathway is amino-acid biosynthesis; L-arginine biosynthesis; L-arginine from L-ornithine and carbamoyl phosphate: step 2/3. The protein is Argininosuccinate synthase of Listeria innocua serovar 6a (strain ATCC BAA-680 / CLIP 11262).